The sequence spans 82 residues: Sec-independent protein translocase protein TatA (82 aa).

A helical transmembrane segment spans residues 1 to 21 (MGIFDWKHWIVILIVVVLVFG). A disordered region spans residues 43–82 (VNTEEDDKKEQPAAQPAQPLNQPHTIDAQAQKVEEPARKD).

Belongs to the TatA/E family. The Tat system comprises two distinct complexes: a TatABC complex, containing multiple copies of TatA, TatB and TatC subunits, and a separate TatA complex, containing only TatA subunits. Substrates initially bind to the TatABC complex, which probably triggers association of the separate TatA complex to form the active translocon.

It is found in the cell inner membrane. Functionally, part of the twin-arginine translocation (Tat) system that transports large folded proteins containing a characteristic twin-arginine motif in their signal peptide across membranes. TatA could form the protein-conducting channel of the Tat system. This Pseudomonas paraeruginosa (strain DSM 24068 / PA7) (Pseudomonas aeruginosa (strain PA7)) protein is Sec-independent protein translocase protein TatA.